An 80-amino-acid chain; its full sequence is Acyl carrier protein (80 aa).

Positions Asp-4 to Lys-79 constitute a Carrier domain. O-(pantetheine 4'-phosphoryl)serine is present on Ser-39.

This sequence belongs to the acyl carrier protein (ACP) family. 4'-phosphopantetheine is transferred from CoA to a specific serine of apo-ACP by AcpS. This modification is essential for activity because fatty acids are bound in thioester linkage to the sulfhydryl of the prosthetic group.

Its subcellular location is the cytoplasm. Its pathway is lipid metabolism; fatty acid biosynthesis. Functionally, carrier of the growing fatty acid chain in fatty acid biosynthesis. The polypeptide is Acyl carrier protein (Borrelia garinii subsp. bavariensis (strain ATCC BAA-2496 / DSM 23469 / PBi) (Borreliella bavariensis)).